Consider the following 223-residue polypeptide: Killer cell lectin-like receptor subfamily B member 1B allele B (223 aa).

Residues 1 to 43 (MDSTTLVYADLNLARIQEPKHDSPPSLSPDTCRCPRWHRLALK) are Cytoplasmic-facing. Positions 6–11 (LVYADL) match the ITIM motif motif. The short motif at 32 to 35 (CRCP) is the LCK-binding motif element. The helical; Signal-anchor for type II membrane protein transmembrane segment at 44–64 (FGCAGLILLVLVVIGLCVLVL) threads the bilayer. Residues 65 to 223 (SVQKSSVQKI…LNHETPCNDS (159 aa)) are Extracellular-facing. The C-type lectin domain maps to 101 to 211 (HRDKCFHVSQ…CSSDNRWICQ (111 aa)). 2 disulfides stabilise this stretch: C122–C210 and C189–C202.

In terms of assembly, homodimer; disulfide-linked. Interacts with tyrosine kinase LCK. Binds PTPN6/SHP-1 in a phosphorylation-dependent manner. Expressed in NK cells and a subset of T-cells.

The protein resides in the membrane. Functionally, receptor for CLEC2D/OCIL. Ligand-binding contributes to inhibition of cytotoxic natural killer (NK) cells. May mediate MHC class I-independent 'missing-self' recognition of allografts, tumor cells and virus-infected cells. This chain is Killer cell lectin-like receptor subfamily B member 1B allele B (Klrb1b), found in Mus musculus (Mouse).